The chain runs to 316 residues: Secreted effector protein SifB (316 aa).

This sequence belongs to the Sif family.

The protein localises to the secreted. It localises to the host cytoplasm. Its function is as follows. Effector proteins function to alter host cell physiology and promote bacterial survival in host tissues. The chain is Secreted effector protein SifB (sifB) from Salmonella typhimurium (strain LT2 / SGSC1412 / ATCC 700720).